We begin with the raw amino-acid sequence, 388 residues long: Homeobox protein Hox-A13 (388 aa).

The homeobox DNA-binding region spans 322–381; sequence GRKKRVPYTKVQLKELEREYATNKFITKDKRRRISATTNLSERQVTIWFQNRRVKEKKVI.

This sequence belongs to the Abd-B homeobox family. As to quaternary structure, binds DNA as a homodimer. Interacts with MEIS1, MEIS2 and MEIS3.

It localises to the nucleus. Sequence-specific, AT-rich binding transcription factor which is part of a developmental regulatory system that provides cells with specific positional identities on the anterior-posterior axis. Its function is as follows. Sequence-specific transcription factor which is part of a developmental regulatory system that provides cells with specific positional identities on the anterior-posterior axis. The protein is Homeobox protein Hox-A13 (HOXA13) of Homo sapiens (Human).